The sequence spans 668 residues: DNA ligase (668 aa).

NAD(+) is bound by residues 34-38 (DAEYD), 83-84 (SL), and Glu117. Lys119 functions as the N6-AMP-lysine intermediate in the catalytic mechanism. NAD(+) contacts are provided by Arg140, Glu177, Lys293, and Lys317. Residues Cys411, Cys414, Cys429, and Cys434 each coordinate Zn(2+). The region spanning 591 to 668 (RVGGRFTGKT…SEDDFLELMQ (78 aa)) is the BRCT domain.

It belongs to the NAD-dependent DNA ligase family. LigA subfamily. The cofactor is Mg(2+). It depends on Mn(2+) as a cofactor.

It carries out the reaction NAD(+) + (deoxyribonucleotide)n-3'-hydroxyl + 5'-phospho-(deoxyribonucleotide)m = (deoxyribonucleotide)n+m + AMP + beta-nicotinamide D-nucleotide.. In terms of biological role, DNA ligase that catalyzes the formation of phosphodiester linkages between 5'-phosphoryl and 3'-hydroxyl groups in double-stranded DNA using NAD as a coenzyme and as the energy source for the reaction. It is essential for DNA replication and repair of damaged DNA. This Citrifermentans bemidjiense (strain ATCC BAA-1014 / DSM 16622 / JCM 12645 / Bem) (Geobacter bemidjiensis) protein is DNA ligase.